The sequence spans 140 residues: Large ribosomal subunit protein bL17 (140 aa).

It belongs to the bacterial ribosomal protein bL17 family. Part of the 50S ribosomal subunit. Contacts protein L32.

In Rhizobium leguminosarum bv. trifolii (strain WSM2304), this protein is Large ribosomal subunit protein bL17.